Consider the following 232-residue polypeptide: U-scoloptoxin(11)-Sa3a (232 aa).

Positions 1 to 21 (MFQFCLLILLLAPGRFFSALG) are cleaved as a signal peptide.

This sequence belongs to the scoloptoxin-11 family. Contains 8 disulfide bonds. Expressed by the venom gland.

The protein localises to the secreted. The sequence is that of U-scoloptoxin(11)-Sa3a from Scolopendra alternans (Florida Keys giant centipede).